The sequence spans 222 residues: UPF0488 protein C8orf33 homolog (222 aa).

Over residues 1–16 (MAEPGRPAREAPAASS) the composition is skewed to low complexity. 3 disordered regions span residues 1–103 (MAEP…AEQL), 119–146 (KTQR…TPLP), and 186–210 (VSEA…KTTP). The residue at position 2 (A2) is an N-acetylalanine. Positions 17-28 (RKTHRAPRRPRP) are enriched in basic residues. R27 carries the omega-N-methylarginine modification. The span at 29–39 (SRSASGASEPP) shows a compositional bias: low complexity. S75 carries the phosphoserine modification. Positions 93-103 (PPSAEAQAEQL) are enriched in low complexity.

The protein belongs to the UPF0488 family.

This Mus musculus (Mouse) protein is UPF0488 protein C8orf33 homolog.